The chain runs to 676 residues: tRNA uridine 5-carboxymethylaminomethyl modification enzyme MnmG (676 aa).

FAD is bound at residue 15–20 (GAGHAG). Residue 316 to 330 (GPRYCPSIEDKIVRF) coordinates NAD(+).

It belongs to the MnmG family. Homodimer. Heterotetramer of two MnmE and two MnmG subunits. The cofactor is FAD.

It is found in the cytoplasm. Its function is as follows. NAD-binding protein involved in the addition of a carboxymethylaminomethyl (cmnm) group at the wobble position (U34) of certain tRNAs, forming tRNA-cmnm(5)s(2)U34. The protein is tRNA uridine 5-carboxymethylaminomethyl modification enzyme MnmG of Roseiflexus castenholzii (strain DSM 13941 / HLO8).